Here is a 267-residue protein sequence, read N- to C-terminus: Glutamate racemase (267 aa).

Substrate-binding positions include 13 to 14 (DS) and 45 to 46 (YG). Cys77 acts as the Proton donor/acceptor in catalysis. Substrate is bound at residue 78 to 79 (NT). The Proton donor/acceptor role is filled by Cys192. Substrate is bound at residue 193-194 (TH).

It belongs to the aspartate/glutamate racemases family.

It carries out the reaction L-glutamate = D-glutamate. It functions in the pathway cell wall biogenesis; peptidoglycan biosynthesis. Functionally, provides the (R)-glutamate required for cell wall biosynthesis. This is Glutamate racemase from Sinorhizobium fredii (strain NBRC 101917 / NGR234).